The primary structure comprises 574 residues: Uric acid-xanthine permease (574 aa).

Positions 1 to 20 are disordered; it reads MDNSIHSTDGPDSVIPNSNP. 12 helical membrane passes run 77 to 97, 111 to 131, 141 to 161, 188 to 209, 217 to 237, 264 to 284, 296 to 315, 338 to 361, 427 to 447, 451 to 471, 482 to 502, and 522 to 542; these read LLAFILGLQHALAMLAGVVTP, LQQYLVSTSLIVCGLLSMVQI, YYIGSGVLSVMGVSFSIISVA, AYGALIGTSACCALVEILLAFV, IFPPIVTGPTVMLIGISLIGT, LPWGSPEFIGLGFLVFVSIIL, CSVVIGLLVGCIVAAACGYF, VYGPMVLPIIAVFIICACECIGDV, CCLILIVAGIFAKFAAAIVAI, VMGGMKTFLFASVVISGQAIV, FILTASMALGYGATLVPTWFG, and LVLETGFAVTAFVAMLLNAIM. The segment at 555 to 574 is disordered; the sequence is MPVSAHDNRDGEAEYQSKQA. Lys572 participates in a covalent cross-link: Glycyl lysine isopeptide (Lys-Gly) (interchain with G-Cter in ubiquitin).

Belongs to the nucleobase:cation symporter-2 (NCS2) (TC 2.A.40) family. Post-translationally, ubiquitinated by hulA. Ubiquitination leads to internalization, sorting into the endosomal pathway to the vacuolar lumen where uapA is eventually degraded.

The protein localises to the cell membrane. Its function is as follows. Uric acid-xanthine transporter. This Emericella nidulans (strain FGSC A4 / ATCC 38163 / CBS 112.46 / NRRL 194 / M139) (Aspergillus nidulans) protein is Uric acid-xanthine permease (uapA).